The chain runs to 81 residues: Small ribosomal subunit protein bS18A (81 aa).

It belongs to the bacterial ribosomal protein bS18 family. In terms of assembly, part of the 30S ribosomal subunit. Forms a tight heterodimer with protein bS6.

Its function is as follows. Binds as a heterodimer with protein bS6 to the central domain of the 16S rRNA, where it helps stabilize the platform of the 30S subunit. The sequence is that of Small ribosomal subunit protein bS18A from Saccharopolyspora erythraea (strain ATCC 11635 / DSM 40517 / JCM 4748 / NBRC 13426 / NCIMB 8594 / NRRL 2338).